The primary structure comprises 1036 residues: Histidine kinase 3 (1036 aa).

At 1–8 (MSLFHVLG) the chain is on the extracellular side. The chain crosses the membrane as a helical span at residues 9–29 (FGVKIGHLFWMLCCWFVSWFV). Topologically, residues 30 to 94 (DNGIEDKSGL…VKFNKAWWRK (65 aa)) are cytoplasmic. A helical membrane pass occupies residues 95 to 115 (LVVVWVVFWVLVSIWTFWYFS). Over 116–399 (SQAMEKRKET…CRFKQKPPWP (284 aa)) the chain is Extracellular. One can recognise a CHASE domain in the interval 163–389 (IPSAIDQRTF…GDPLRKHEMR (227 aa)). The chain crosses the membrane as a helical span at residues 400 to 420 (VLSMVTSFGILVIALLVAHII). At 421 to 1036 (HATVSRIHKV…FFNSPSDTES (616 aa)) the chain is on the cytoplasmic side. In terms of domain architecture, Histidine kinase spans 457–723 (TVSHEIRTPM…TFTFTAVFSN (267 aa)). Histidine 460 is subject to Phosphohistidine; by autocatalysis. 2 Response regulatory domains span residues 746–865 (KAVV…QRGL) and 891–1028 (KILI…SRFF). Residue aspartate 941 is modified to 4-aspartylphosphate.

In terms of assembly, interacts with AHK2, AHK4, AHP1, AHP2, AHP3, AHP5 and At5g43560. Autophosphorylated predominantly on His residues. Activation probably requires a transfer of a phosphate group between a His in the transmitter domain and an Asp of the receiver domain. In terms of tissue distribution, mostly expressed in leaves and flowers, and, to a lower extent, in roots, stems, and siliques, especially in the vascular tissues. Present in seedlings.

It localises to the cell membrane. The protein resides in the endoplasmic reticulum membrane. It carries out the reaction ATP + protein L-histidine = ADP + protein N-phospho-L-histidine.. With respect to regulation, activated by cytokinins to initiate phosphorelay signaling. This cytokinin-mediated activation is repressed by the trans-zeatin antagonists 6-(2-hydroxy-3-methylbenzylamino)purine (PI-55) and 6-(2,5-Dihydroxybenzylamino)purine (LGR-991). In terms of biological role, cytokinins (CK) receptor related to bacterial two-component regulators. Functions as a histidine kinase and transmits the stress signal to a downstream MAPK cascade. This protein undergoes an ATP-dependent autophosphorylation at a conserved histidine residue in the kinase core, and a phosphoryl group is then transferred to a conserved aspartate residue in the receiver domain. In the presence of cytokinin, feeds phosphate to phosphorelay-integrating histidine phosphotransfer protein (HPt) and activates subsequent cascade. Involved in meristems establishment in seedlings. Redundant negative regulator of drought and salt stress responses and abscisic acid (ABA) signaling. Together with AHK2, plays a negative regulatory role in cold stress signaling via inhibition of ABA response, occurring independently of the cold acclimation pathway. Redundant positive regulator of cytokinin signaling that regulates many developmental processes including seed germination, cell division, seed size, chlorophyll retention during leaf senescence, root repression and shoot promotion. Can interact with isoprenoid-type cytokinins trans-zeatin (tZ and tZR), cis-zeatin (cZ), dihydrozeatin (DZ), buta-2,3-dienyladenine (HA-8), penta-2,3-dienyladenine (HA-1), 4-methyl-penta-2,3-dienyladenine (HA-10), 4-hydroxy-2-butynyladenine (RM1), 2-propynyladenine (RM3), 2-butynyladenine (RM6), and cytokinin ribosides and ribotides. Together with AHK4, involved in the cytokinin-dependent responses to Pi starvation and sucrose stresses. Promotes cytokinin-mediated leaf longevity through a specific phosphorylation of the response regulator ARR2. Involved in alkamides (e.g. N-isobutyl decanamide) and N-acylethanolamides (NAE) signaling that control meristematic activity and differentiation processes during plant development. Contributes to vascular bundle formation and secondary growth in a cytokinin-dependent manner, probably by promoting the maintenance of mitotic activity and/or identity of procambial cells. Plays a role in the cytokinin-mediated repression of the iron uptake pathway. Required by the cytokinin-dependent flower development regulation pathway. In Arabidopsis thaliana (Mouse-ear cress), this protein is Histidine kinase 3 (AHK3).